Reading from the N-terminus, the 154-residue chain is Protein X (154 aa).

A mitochondrial targeting sequence region spans residues P68 to F117.

The protein belongs to the orthohepadnavirus protein X family. May form homodimer. May interact with host CEBPA, CFLAR, CREB1, DDB1, E4F1, HBXIP, HSPD1/HSP60, NFKBIA, POLR2E and SMAD4. Interacts with host SMC5-SMC6 complex and induces its degradation. Interacts with host TRPC4AP; leading to prevent ubiquitination of TRPC4AP. Interacts with host PLSCR1; this interaction promotes ubiquitination and degradation of HBx and impairs HBx-mediated cell proliferation. Post-translationally, a fraction may be phosphorylated in insect cells and HepG2 cells, a human hepatoblastoma cell line. Phosphorylated in vitro by host protein kinase C or mitogen-activated protein kinase. N-acetylated in insect cells.

It is found in the host cytoplasm. Its subcellular location is the host nucleus. The protein resides in the host mitochondrion. Its function is as follows. Multifunctional protein that plays a role in silencing host antiviral defenses and promoting viral transcription. Does not seem to be essential for HBV infection. May be directly involved in development of cirrhosis and liver cancer (hepatocellular carcinoma). Most of cytosolic activities involve modulation of cytosolic calcium. The effect on apoptosis is controversial depending on the cell types in which the studies have been conducted. May induce apoptosis by localizing in mitochondria and causing loss of mitochondrial membrane potential. May also modulate apoptosis by binding host CFLAR, a key regulator of the death-inducing signaling complex (DISC). Promotes viral transcription by using the host E3 ubiquitin ligase DDB1 to target the SMC5-SMC6 complex to proteasomal degradation. This host complex would otherwise bind to viral episomal DNA, and prevents its transcription. Moderately stimulates transcription of many different viral and cellular transcription elements. Promoters and enhancers stimulated by HBx contain DNA binding sites for NF-kappa-B, AP-1, AP-2, c-EBP, ATF/CREB, or the calcium-activated factor NF-AT. The sequence is that of Protein X from Hepatitis B virus genotype A3 (isolate Cameroon/CMR983/1994) (HBV-A).